Here is a 676-residue protein sequence, read N- to C-terminus: Envelope glycoprotein (676 aa).

The first 32 residues, 1 to 32 (MGVTGILQLPRDRFKRTSFFLWVIILFQRTFS), serve as a signal peptide directing secretion. Topologically, residues 33–650 (IPLGVIHNST…NDNWWTGWRQ (618 aa)) are extracellular. N-linked (GlcNAc...) asparagine; by host glycosylation occurs at asparagine 40. 5 disulfides stabilise this stretch: cysteine 53–cysteine 609, cysteine 108–cysteine 135, cysteine 121–cysteine 147, cysteine 511–cysteine 556, and cysteine 601–cysteine 608. The segment at 54–201 (RDKLSSTNQL…DFFSSHPLRE (148 aa)) is receptor-binding. N-linked (GlcNAc...) asparagine; by host glycans are attached at residues asparagine 204, asparagine 228, asparagine 238, asparagine 257, asparagine 268, asparagine 296, asparagine 317, asparagine 333, asparagine 346, asparagine 386, and asparagine 413. A mucin-like region region spans residues 305–485 (ELSFTVVSNG…SGKLGLITNT (181 aa)). Residues 315-335 (AKNISGQSPARTSSDPGTNTT) show a composition bias toward polar residues. The interval 315–337 (AKNISGQSPARTSSDPGTNTTTE) is disordered. Positions 373–391 (TSPQSLTTKPGPDNSTHNT) are enriched in polar residues. Disordered stretches follow at residues 373–392 (TSPQ…HNTP) and 402–479 (TQVE…SGKL). Residues 414-432 (DSTASDTPSATTAAGPPKA) show a composition bias toward low complexity. The segment covering 433–464 (ENTNTSKSTDFLDPATTTSPQNHSETAGNNNT) has biased composition (polar residues). 3 N-linked (GlcNAc...) asparagine; by host glycosylation sites follow: asparagine 436, asparagine 454, and asparagine 462. A fusion peptide region spans residues 524–539 (GAAIGLAWIPYFGPAA). Positions 554–595 (LICGLRQLANETTQALQLFLRATTELRTFSILNRKAIDFLLQ) form a coiled coil. N-linked (GlcNAc...) asparagine; by host glycosylation occurs at asparagine 563. Residues 615 to 634 (WTKNITDKIDQIIHDFVDKT) are a coiled coil. N-linked (GlcNAc...) asparagine; by host glycosylation occurs at asparagine 618. A helical membrane pass occupies residues 651–671 (WIPAGIGVTGVIIAVIALFCI). Residues cysteine 670 and cysteine 672 are each lipidated (S-palmitoyl cysteine; by host). Topologically, residues 672 to 676 (CKFVF) are cytoplasmic.

Belongs to the filoviruses glycoprotein family. As to quaternary structure, homotrimer; each monomer consists of a GP1 and a GP2 subunit linked by disulfide bonds. The resulting peplomers (GP1,2) protrude from the virus surface as spikes. Interacts with host integrin alpha-V/ITGAV. Interacts with host CLEC10A. Binds also to host CD209 and CLEC4M/DC-SIGN(R). Interacts with host FOLR1. Interacts with BST2; this interaction inhibits the antiviral effect of BST2 and this allows viral release from infected cells. Interacts with host FCN1; this interaction enhances viral entry. Interacts with host TLR4; this interaction induces cell death in T-lymphocytes or proinflammatory cytokines and SOCS1 production in monocytes. In terms of assembly, interacts with host entry receptor NPC1. GP1 and GP2delta are part of GP1,2delta soluble complexes released by ectodomain shedding. Post-translationally, the signal peptide region modulates GP's high mannose glycosylation, thereby determining the efficiency of the interactions with DC-SIGN(R). N-glycosylated. In terms of processing, O-glycosylated in the mucin-like region. Post-translationally, palmitoylation of GP2 is not required for its function. Specific enzymatic cleavages in vivo yield mature proteins. The precursor is processed into GP1 and GP2 by host cell furin in the trans Golgi, and maybe by other host proteases, to yield the mature GP1 and GP2 proteins. The cleavage site corresponds to the furin optimal cleavage sequence [KR]-X-[KR]-R. This cleavage does not seem to be required for function. After the internalization of the virus into cell endosomes, GP1 C-terminus is removed by the endosomal proteases cathepsin B, cathepsin L, or both, leaving a 19-kDa N-terminal fragment which is further digested by cathepsin B. Proteolytic processing of GP1,2 by host ADAM17 can remove the transmembrane anchor of GP2 and leads to shedding of complexes consisting in GP1 and truncated GP2 (GP1,2delta).

Its subcellular location is the virion membrane. It is found in the host cell membrane. It localises to the secreted. Trimeric GP1,2 complexes form the virion surface spikes and mediate the viral entry processes, with GP1 acting as the receptor-binding subunit and GP2 as the membrane fusion subunit. At later times of infection, down-regulates the expression of various host cell surface molecules that are essential for immune surveillance and cell adhesion. Down-modulates several integrins including ITGA1, ITGA2, ITGA3, ITGA4, ITGA5, ITGA6, ITGAV and ITGB1. This decrease in cell adhesion molecules may lead to cell detachment, contributing to the disruption of blood vessel integrity and hemorrhages developed during infection (cytotoxicity). Interacts with host TLR4 and thereby stimulates the differentiation and activation of monocytes leading to bystander death of T-lymphocytes. Down-regulates as well the function of host natural killer cells. Counteracts the antiviral effect of host BST2/tetherin that restricts release of progeny virions from infected cells. However, cooperates with VP40 and host BST2 to activate canonical NF-kappa-B pathway in a manner dependent on neddylation. Its function is as follows. Functions as a decoy for anti-GP1,2 antibodies thereby contributing to viral immune evasion. Interacts and activates host macrophages and dendritic cells inducing up-regulation of cytokine transcription. This effect is mediated throught activation of host TLR4. Functionally, responsible for binding to the receptor(s) on target cells. Interacts with CD209/DC-SIGN and CLEC4M/DC-SIGNR which act as cofactors for virus entry into dendritic cells (DCs) and endothelial cells. Binding to the macrophage specific lectin CLEC10A also seems to enhance virus infectivity. Interaction with FOLR1/folate receptor alpha may be a cofactor for virus entry in some cell types, although results are contradictory. Members of the Tyro3 receptor tyrosine kinase family also seem to be cell entry factors in filovirus infection. Once attached, the virions are internalized through clathrin-dependent endocytosis and/or macropinocytosis. After internalization of the virus into the endosomes of the host cell, proteolysis of GP1 by two cysteine proteases, CTSB/cathepsin B and CTSL/cathepsin L removes the glycan cap and allows GP1 binding to the host entry receptor NPC1. NPC1-binding, Ca(2+) and acidic pH induce a conformational change of GP2, which unmasks its fusion peptide and permit membranes fusion. In terms of biological role, acts as a class I viral fusion protein. Under the current model, the protein has at least 3 conformational states: pre-fusion native state, pre-hairpin intermediate state, and post-fusion hairpin state. During viral and target cell membrane fusion, the coiled coil regions (heptad repeats) assume a trimer-of-hairpins structure, positioning the fusion peptide in close proximity to the C-terminal region of the ectodomain. The formation of this structure appears to drive apposition and subsequent fusion of viral and target cell membranes. Responsible for penetration of the virus into the cell cytoplasm by mediating the fusion of the membrane of the endocytosed virus particle with the endosomal membrane. Low pH in endosomes induces an irreversible conformational change in GP2, releasing the fusion hydrophobic peptide. This chain is Envelope glycoprotein (GP), found in Epomops franqueti (Franquet's epauletted fruit bat).